Consider the following 719-residue polypeptide: 1,4-alpha-glucan branching enzyme GlgB (719 aa).

The active-site Nucleophile is Asp-400. Glu-453 functions as the Proton donor in the catalytic mechanism.

Belongs to the glycosyl hydrolase 13 family. GlgB subfamily. As to quaternary structure, monomer.

It carries out the reaction Transfers a segment of a (1-&gt;4)-alpha-D-glucan chain to a primary hydroxy group in a similar glucan chain.. It participates in glycan biosynthesis; glycogen biosynthesis. In terms of biological role, catalyzes the formation of the alpha-1,6-glucosidic linkages in glycogen by scission of a 1,4-alpha-linked oligosaccharide from growing alpha-1,4-glucan chains and the subsequent attachment of the oligosaccharide to the alpha-1,6 position. The chain is 1,4-alpha-glucan branching enzyme GlgB from Chlamydia caviae (strain ATCC VR-813 / DSM 19441 / 03DC25 / GPIC) (Chlamydophila caviae).